We begin with the raw amino-acid sequence, 69 residues long: Amphipathic peptide OcyC2 (69 aa).

The first 23 residues, Met-1 to Gly-23, serve as a signal peptide directing secretion. Ile-37 carries the isoleucine amide modification. The propeptide occupies Gly-41–Lys-69.

Belongs to the non-disulfide-bridged peptide (NDBP) superfamily. Short antimicrobial peptide (group 4) family. Expressed by the venom gland.

The protein resides in the secreted. The protein localises to the target cell membrane. Its function is as follows. Amphipathic peptide with antimicrobial activity. Shows antifungal activity with MIC values ranging from 25 to 200 uM. Does not show antifungal activity against Candida glabrata (ATCC90030) and Candida parapsilosis (ATCC22019) (MIC&gt;400 uM). The protein is Amphipathic peptide OcyC2 of Opisthacanthus cayaporum (South American scorpion).